The sequence spans 146 residues: 3-dehydroquinate dehydratase (146 aa).

Catalysis depends on Tyr22, which acts as the Proton acceptor. Substrate contacts are provided by Asn73, His79, and Asp86. His99 acts as the Proton donor in catalysis. Substrate-binding positions include 100-101 and Arg110; that span reads LS.

It belongs to the type-II 3-dehydroquinase family. Homododecamer.

It carries out the reaction 3-dehydroquinate = 3-dehydroshikimate + H2O. It participates in metabolic intermediate biosynthesis; chorismate biosynthesis; chorismate from D-erythrose 4-phosphate and phosphoenolpyruvate: step 3/7. Catalyzes a trans-dehydration via an enolate intermediate. The sequence is that of 3-dehydroquinate dehydratase from Parasynechococcus marenigrum (strain WH8102).